The primary structure comprises 208 residues: Large ribosomal subunit protein uL4 (208 aa).

This sequence belongs to the universal ribosomal protein uL4 family. As to quaternary structure, part of the 50S ribosomal subunit.

Its function is as follows. One of the primary rRNA binding proteins, this protein initially binds near the 5'-end of the 23S rRNA. It is important during the early stages of 50S assembly. It makes multiple contacts with different domains of the 23S rRNA in the assembled 50S subunit and ribosome. Forms part of the polypeptide exit tunnel. The sequence is that of Large ribosomal subunit protein uL4 from Solibacter usitatus (strain Ellin6076).